The chain runs to 360 residues: MTALDTLRGKYIEAISSAADEAALEEVRLAALGKKGEISLKMRELGQMSPEERQTTGAALNRLRDEIDASLRARKQGLADAALDARLKTEWLDVTLPGRPRRAGTIHPVSQVMAELTAIFADMGFAVAEGPQVESDWFNFDALNIPPEHPARQEHDTFFMARAEGDDRPPHVLRTHTSPVQIRAMQAQGAPIRVIAPGRVYRMDMDQTHTPMFHQVEGLAIDRDISMANLKWVLEEFCRAFFEVPSVELRFRASHFPFTEPSAEVDIRCSWEGGQLRIGEGDGWLEILGSGMVHPKVLAAAGVNPDEWQGFAFGMGIDRIAMLKYGIPDLRAFFESDLRWLRHYGFAALDMPDLAGGLSR.

Residue E260 participates in Mg(2+) binding.

Belongs to the class-II aminoacyl-tRNA synthetase family. Phe-tRNA synthetase alpha subunit type 1 subfamily. As to quaternary structure, tetramer of two alpha and two beta subunits. Requires Mg(2+) as cofactor.

The protein resides in the cytoplasm. The catalysed reaction is tRNA(Phe) + L-phenylalanine + ATP = L-phenylalanyl-tRNA(Phe) + AMP + diphosphate + H(+). This is Phenylalanine--tRNA ligase alpha subunit from Cereibacter sphaeroides (strain ATCC 17029 / ATH 2.4.9) (Rhodobacter sphaeroides).